Consider the following 328-residue polypeptide: Malate dehydrogenase (328 aa).

12-18 (GAAGQIG) serves as a coordination point for NAD(+). Positions 95 and 101 each coordinate substrate. NAD(+) contacts are provided by residues N108, Q115, and 132–134 (VGN). Substrate-binding residues include N134 and R165. H190 acts as the Proton acceptor in catalysis.

The protein belongs to the LDH/MDH superfamily. MDH type 2 family.

The catalysed reaction is (S)-malate + NAD(+) = oxaloacetate + NADH + H(+). Functionally, catalyzes the reversible oxidation of malate to oxaloacetate. This chain is Malate dehydrogenase, found in Polaromonas naphthalenivorans (strain CJ2).